The following is a 283-amino-acid chain: ATP phosphoribosyltransferase (283 aa).

It belongs to the ATP phosphoribosyltransferase family. Long subfamily. Mg(2+) serves as cofactor.

Its subcellular location is the cytoplasm. The catalysed reaction is 1-(5-phospho-beta-D-ribosyl)-ATP + diphosphate = 5-phospho-alpha-D-ribose 1-diphosphate + ATP. It participates in amino-acid biosynthesis; L-histidine biosynthesis; L-histidine from 5-phospho-alpha-D-ribose 1-diphosphate: step 1/9. Feedback inhibited by histidine. Catalyzes the condensation of ATP and 5-phosphoribose 1-diphosphate to form N'-(5'-phosphoribosyl)-ATP (PR-ATP). Has a crucial role in the pathway because the rate of histidine biosynthesis seems to be controlled primarily by regulation of HisG enzymatic activity. The protein is ATP phosphoribosyltransferase of Rhodococcus jostii (strain RHA1).